Consider the following 31-residue polypeptide: MERSTRELCLNFTVVLITVILIWLLVRSYQY.

Residues 1–7 are Cytoplasmic-facing; it reads MERSTRE. The chain crosses the membrane as a helical span at residues 8–26; that stretch reads LCLNFTVVLITVILIWLLV. The Lumenal segment spans residues 27-31; it reads RSYQY.

The protein belongs to the sarcolipin family. Homooligomer. Can also form heterooligomers with other sarcoplasmic/endoplasmic reticulum calcium ATPase (SERCA) regulators ARLN, ERLN, PLN and STRIT1/DWORF. Monomer. Interacts with calcium ATPase ATP2A1/SERCA1. Interacts as a monomer with ATP2A2/SERCA2; the interaction decreases ATP2A2 Ca(2+) affinity. Interacts with VMP1; VMP1 competes with PLN and SLN to prevent them from forming an inhibitory complex with ATP2A2. Skeletal muscle (at protein level).

The protein localises to the sarcoplasmic reticulum membrane. It is found in the endoplasmic reticulum membrane. In terms of biological role, reversibly inhibits the activity of ATP2A1/SERCA1 and ATP2A2/SERCA2 in sarcoplasmic reticulum by decreasing the apparent affinity of the ATPase for Ca(2+). Also inhibits the activity of ATP2A3/SERCA3. Modulates calcium re-uptake during muscle relaxation and plays an important role in calcium homeostasis in muscle. Required for muscle-based, non-shivering thermogenesis. The polypeptide is Sarcolipin (SLN) (Oryctolagus cuniculus (Rabbit)).